Here is a 1040-residue protein sequence, read N- to C-terminus: Desmoglein-4 (1040 aa).

The first 23 residues, 1–23 (MDWLLFRNICLLILFMVVLGVNS), serve as a signal peptide directing secretion. The propeptide occupies 24-49 (EFIVEVKELDIENGTTTWQTVRRQKR). Cadherin domains follow at residues 50 to 157 (EWIK…PPVF), 158 to 269 (TQNV…FPIL), 270 to 385 (EKTS…GPTF), and 389 to 497 (SMTF…CPVI). Residues 50-633 (EWIKFAAACR…RQSNVGLGPA (584 aa)) are Extracellular-facing. An N-linked (GlcNAc...) asparagine glycan is attached at Asn-110. Asn-545 carries N-linked (GlcNAc...) asparagine glycosylation. Residues 634 to 654 (GIGMIILGLLLLFLSPLLLLM) traverse the membrane as a helical segment. Residues 655-1040 (CCCKRRQPEG…RYSNIHYSRQ (386 aa)) are Cytoplasmic-facing. Desmoglein repeat repeat units follow at residues 883 to 909 (TLSEAEFQAEMAAASEPMIHGDIIVTE) and 910 to 940 (TYTATDPCVQPTTIVFDSQLPPNVVVTETVM). The segment at 1015 to 1040 (QTTRSTSPMTSQHRVTRYSNIHYSRQ) is disordered.

In terms of assembly, interacts with JUP.

The protein localises to the cell membrane. Its subcellular location is the cell junction. It localises to the desmosome. Its function is as follows. A component of desmosome cell-cell junctions which are required for positive regulation of cellular adhesion. Coordinates the transition from proliferation to differentiation in hair follicle keratinocytes. Plays a role in moderating lymphocyte migration to inflamed skin and maintaining homeostasis of the epidermal inflammatory response. In Rattus norvegicus (Rat), this protein is Desmoglein-4 (Dsg4).